Consider the following 393-residue polypeptide: Mitogen-activated protein kinase 10 (393 aa).

The Protein kinase domain occupies 60–345; sequence KPPIRPIGRG…VKEALAHPYL (286 aa). Residues 66–74 and lysine 89 each bind ATP; that span reads IGRGACGIV. Aspartate 186 serves as the catalytic Proton acceptor. A Phosphothreonine modification is found at threonine 218. Positions 218-220 match the TXY motif; sequence TEY. Tyrosine 220 is subject to Phosphotyrosine. Position 223 is a phosphothreonine (threonine 223).

The protein belongs to the protein kinase superfamily. CMGC Ser/Thr protein kinase family. MAP kinase subfamily. In terms of assembly, interacts with MKK2. Dually phosphorylated on Thr-218 and Tyr-220, which activates the enzyme.

The enzyme catalyses L-seryl-[protein] + ATP = O-phospho-L-seryl-[protein] + ADP + H(+). The catalysed reaction is L-threonyl-[protein] + ATP = O-phospho-L-threonyl-[protein] + ADP + H(+). Activated by threonine and tyrosine phosphorylation. The protein is Mitogen-activated protein kinase 10 (MPK10) of Arabidopsis thaliana (Mouse-ear cress).